Consider the following 143-residue polypeptide: Submaxillary gland androgen-regulated protein 2, isoform delta (143 aa).

An N-terminal signal peptide occupies residues 1–22 (MKPLCLVFGLCVLIGCFLSSEC). Disordered stretches follow at residues 28–52 (GQHD…PDPN) and 116–143 (VPRK…TDSF). 2 stretches are compositionally biased toward polar residues: residues 36 to 45 (LSPSNPSSHF) and 122 to 143 (NATP…TDSF).

The protein resides in the secreted. Its function is as follows. May play a role in protection or detoxification. This is Submaxillary gland androgen-regulated protein 2, isoform delta (Smr2) from Mus musculus (Mouse).